The primary structure comprises 261 residues: Cytosolic Fe-S cluster assembly factor Nubp2 homolog (261 aa).

Residue 14–21 (GKGGVGKS) coordinates ATP. The [4Fe-4S] cluster site is built by Cys188 and Cys191.

The protein belongs to the Mrp/NBP35 ATP-binding proteins family. NUBP2/CFD1 subfamily. As to quaternary structure, heterotetramer of 2 Nubp1 and 2 Nubp2 chains. The cofactor is [4Fe-4S] cluster.

It is found in the cytoplasm. Component of the cytosolic iron-sulfur (Fe/S) protein assembly (CIA) machinery. Required for maturation of extramitochondrial Fe-S proteins. The Nubp1-Nubp2 heterotetramer forms a Fe-S scaffold complex, mediating the de novo assembly of an Fe-S cluster and its transfer to target apoproteins. The sequence is that of Cytosolic Fe-S cluster assembly factor Nubp2 homolog from Drosophila willistoni (Fruit fly).